Here is a 2898-residue protein sequence, read N- to C-terminus: Pericentrin (2898 aa).

Positions 1–117 (MEDEQEQRRR…QPPPPQTAHS (117 aa)) are disordered. The segment covering 34 to 44 (SKKKTAKRKGS) has biased composition (basic residues). A Phosphoserine modification is found at Ser44. Coiled-coil stretches lie at residues 127–343 (LNNM…IRLL) and 382–434 (AQQQ…DSLE). The segment at 429 to 460 (REDSLESTEISSSCVLPEETSGREGKEPPDPL) is disordered. Positions 448 to 457 (TSGREGKEPP) are enriched in basic and acidic residues. Coiled-coil stretches lie at residues 468 to 527 (KVQE…LREK), 611 to 696 (CALQ…LETH), 727 to 787 (VADV…SLRM), and 872 to 939 (SQDQ…LRRL). Residue Ser1022 is modified to Phosphoserine. Coiled coils occupy residues 1069–1383 (EREF…QENM), 1429–1482 (NEVV…SLMG), and 1529–1593 (QLLA…AKEA). At Ser1437 the chain carries Phosphoserine. Disordered regions lie at residues 1745–1786 (VASR…DDVL), 1815–1880 (TQEK…PLTP), and 1958–1979 (TSPS…GPDI). 2 stretches are compositionally biased toward polar residues: residues 1747–1766 (SRDT…SENG) and 1817–1834 (EKLT…SGHS). The interval 1801-1822 (NQDLLVQVEMPDFPTQEKLTSQ) is interaction with CDK5RAP2. Residues Ser1828, Ser1859, Ser1860, and Ser1959 each carry the phosphoserine modification. Residues 1963–1976 (ELARRSDGSRKSDG) show a composition bias toward basic and acidic residues. Ser1987 bears the Phosphoserine mark. A compositionally biased stretch (polar residues) spans 2046-2055 (SESQDPSSAL). The interval 2046–2088 (SESQDPSSALNKGEPRDPLDGFPRDSQALSEVTTDKGEKESLE) is disordered. Basic and acidic residues-rich tracts occupy residues 2058–2068 (GEPRDPLDGFP) and 2078–2088 (TTDKGEKESLE). Residue Ser2128 is modified to Phosphoserine. Coiled-coil stretches lie at residues 2211–2403 (KVEQ…EALQ) and 2429–2590 (HALL…ELSM). Disordered regions lie at residues 2509 to 2532 (VSGG…QFQE) and 2653 to 2684 (NRQS…QTTS). Positions 2545–2810 (LCAAGLLTSF…SQRQRSPSGP (266 aa)) are interaction with NEK2. A compositionally biased stretch (polar residues) spans 2653 to 2671 (NRQSKSSLKQDGTDLQSSL). The calmodulin-binding stretch occupies residues 2758-2771 (KFRTAVRVVIAVLR). The segment at 2787-2898 (ALVHPKSTRH…QKSCHQKIKQ (112 aa)) is disordered. A compositionally biased stretch (basic residues) spans 2792-2802 (KSTRHGHRTSQ). A compositionally biased stretch (polar residues) spans 2845–2860 (TSTPSSRLERSLTASQ). Residues 2861–2874 (DPEHSLTEYIHHLE) are compositionally biased toward basic and acidic residues. Ser2865 carries the post-translational modification Phosphoserine.

In terms of assembly, interacts with DISC1 and PCM1. Binds calmodulin. Interacts with CEP131. Interacts with CDK5RAP2; the interaction is leading to centrosomal localization of PCNT and CDK5RAP2. Interacts with CHD3. Interacts with CHD4; the interaction regulates centrosome integrity. Interacts with NEK2. Interacts with CCDC13. Interacts with CEP68. Interacts with ATF5; the ATF5:PCNT:polyglutamylated tubulin (PGT) tripartite unites the mother centriole and the pericentriolar material (PCM) in the centrosome. Post-translationally, cleaved during mitotis which leads to removal of CDK5RAP2 from the centrosome and promotes centriole disengagement and subsequent centriole separation. The C-terminal fragment is rapidly degraded following cleavage. Ubiquitinated by TRIM43; leading to proteasomal degradation. As to expression, expressed in heart and lung (at protein level). Expressed in kidney, thymus, liver, brain, muscle, testis, spleen, lung and heart.

It localises to the cytoplasm. Its subcellular location is the cytoskeleton. It is found in the microtubule organizing center. The protein localises to the centrosome. In terms of biological role, integral component of the filamentous matrix of the centrosome involved in the initial establishment of organized microtubule arrays in both mitosis and meiosis. Plays a role, together with DISC1, in the microtubule network formation. Is an integral component of the pericentriolar material (PCM). May play an important role in preventing premature centrosome splitting during interphase by inhibiting NEK2 kinase activity at the centrosome. The chain is Pericentrin (Pcnt) from Mus musculus (Mouse).